Reading from the N-terminus, the 347-residue chain is Holliday junction branch migration complex subunit RuvB (347 aa).

Residues 4 to 185 (TDRLITPAPL…FGIISRLEFY (182 aa)) are large ATPase domain (RuvB-L). ATP is bound by residues leucine 24, arginine 25, glycine 66, lysine 69, threonine 70, threonine 71, 132–134 (EDY), arginine 175, tyrosine 185, and arginine 222. Mg(2+) is bound at residue threonine 70. The segment at 186 to 256 (SVEELTQIVM…VADAALLMLD (71 aa)) is small ATPAse domain (RuvB-S). Positions 259–347 (AIGLDVMDRK…LSADLWDEKQ (89 aa)) are head domain (RuvB-H). Positions 295, 314, and 319 each coordinate DNA.

Belongs to the RuvB family. As to quaternary structure, homohexamer. Forms an RuvA(8)-RuvB(12)-Holliday junction (HJ) complex. HJ DNA is sandwiched between 2 RuvA tetramers; dsDNA enters through RuvA and exits via RuvB. An RuvB hexamer assembles on each DNA strand where it exits the tetramer. Each RuvB hexamer is contacted by two RuvA subunits (via domain III) on 2 adjacent RuvB subunits; this complex drives branch migration. In the full resolvosome a probable DNA-RuvA(4)-RuvB(12)-RuvC(2) complex forms which resolves the HJ.

The protein resides in the cytoplasm. The catalysed reaction is ATP + H2O = ADP + phosphate + H(+). Functionally, the RuvA-RuvB-RuvC complex processes Holliday junction (HJ) DNA during genetic recombination and DNA repair, while the RuvA-RuvB complex plays an important role in the rescue of blocked DNA replication forks via replication fork reversal (RFR). RuvA specifically binds to HJ cruciform DNA, conferring on it an open structure. The RuvB hexamer acts as an ATP-dependent pump, pulling dsDNA into and through the RuvAB complex. RuvB forms 2 homohexamers on either side of HJ DNA bound by 1 or 2 RuvA tetramers; 4 subunits per hexamer contact DNA at a time. Coordinated motions by a converter formed by DNA-disengaged RuvB subunits stimulates ATP hydrolysis and nucleotide exchange. Immobilization of the converter enables RuvB to convert the ATP-contained energy into a lever motion, pulling 2 nucleotides of DNA out of the RuvA tetramer per ATP hydrolyzed, thus driving DNA branch migration. The RuvB motors rotate together with the DNA substrate, which together with the progressing nucleotide cycle form the mechanistic basis for DNA recombination by continuous HJ branch migration. Branch migration allows RuvC to scan DNA until it finds its consensus sequence, where it cleaves and resolves cruciform DNA. In Nitrosospira multiformis (strain ATCC 25196 / NCIMB 11849 / C 71), this protein is Holliday junction branch migration complex subunit RuvB.